The primary structure comprises 373 residues: MTAWRDTLGRIGVRAMPGAGGFWRWWQQSLLAWLPQRWQWQLGLSQSRLLLQLDGEALQLLRQRDQTSDTVASLPWPVQPQEVNALLPTALEGLPQHWLLPASHALRRPLRLPAAAAARLQDVARFEIDRQTPFTADQVYFDARVLDVREDGQLDAELVVVPRRMIDGPAGVPEAWSNALSGIDVADARGAPLGVNLLPPARRLRRSDPMQRWNLLLAVAALVLLAVAGWLLLDNRRQAADDLRAQVQANAGRARQVAAERQQLLELVEGAAFFQEQRATRPTSVEIWDELSRRLPSGTYLEKFSVEGGQLQLIGLSKEASSLVRRLEGSPLWHTPSLTGVLQSDAGRNVDRFTITAELAGPDAKEAADAAQR.

At 1-214 (MTAWRDTLGR…RRSDPMQRWN (214 aa)) the chain is on the cytoplasmic side. A helical transmembrane segment spans residues 215 to 233 (LLLAVAALVLLAVAGWLLL). The Periplasmic portion of the chain corresponds to 234–373 (DNRRQAADDL…AKEAADAAQR (140 aa)).

The protein belongs to the GSP L family. In terms of assembly, type II secretion system is composed of four main components: the outer membrane complex, the inner membrane complex, the cytoplasmic secretion ATPase and the periplasm-spanning pseudopilus. Forms homodimers. Interacts with XpsM/GspM. Interacts with XpsE/GspE and XpsF/GspF.

It is found in the cell inner membrane. In terms of biological role, inner membrane component of the type II secretion system required for the energy-dependent secretion of extracellular factors such as proteases and toxins from the periplasm. Plays a role in the complex assembly and recruits XpsM resulting in a stable complex in the inner membrane. Provides thus a link between the energy-providing XpsE protein in the cytoplasm and the rest of the T2SS machinery. This chain is Type II secretion system protein L (pefL), found in Xanthomonas campestris pv. campestris (strain ATCC 33913 / DSM 3586 / NCPPB 528 / LMG 568 / P 25).